A 168-amino-acid polypeptide reads, in one-letter code: Ribosome rescue factor SmrB (168 aa).

The Smr domain occupies 92-167 (LDLHGLTKEQ…GDAAILILFE (76 aa)).

It belongs to the SmrB family. Associates with collided ribosomes, but not with correctly translating polysomes.

Acts as a ribosome collision sensor. Detects stalled/collided disomes (pairs of ribosomes where the leading ribosome is stalled and a second ribosome has collided with it) and endonucleolytically cleaves mRNA at the 5' boundary of the stalled ribosome. Stalled/collided disomes form a new interface (primarily via the 30S subunits) that binds SmrB. Cleaved mRNA becomes available for tmRNA ligation, leading to ribosomal subunit dissociation and rescue of stalled ribosomes. The sequence is that of Ribosome rescue factor SmrB from Pasteurella multocida (strain Pm70).